A 103-amino-acid polypeptide reads, in one-letter code: Small ribosomal subunit protein uS10 (103 aa).

This sequence belongs to the universal ribosomal protein uS10 family. Part of the 30S ribosomal subunit.

Involved in the binding of tRNA to the ribosomes. This Picrophilus torridus (strain ATCC 700027 / DSM 9790 / JCM 10055 / NBRC 100828 / KAW 2/3) protein is Small ribosomal subunit protein uS10.